Consider the following 670-residue polypeptide: DNA ligase (670 aa).

NAD(+) is bound by residues 34–38, 83–84, and Glu-113; these read DFEFD and SL. Lys-115 acts as the N6-AMP-lysine intermediate in catalysis. Positions 136, 173, 288, and 312 each coordinate NAD(+). The Zn(2+) site is built by Cys-406, Cys-409, Cys-424, and Cys-430. The region spanning 591-670 is the BRCT domain; it reads PESDKFAGKS…EAEFISLLNS (80 aa).

This sequence belongs to the NAD-dependent DNA ligase family. LigA subfamily. The cofactor is Mg(2+). Mn(2+) serves as cofactor.

It carries out the reaction NAD(+) + (deoxyribonucleotide)n-3'-hydroxyl + 5'-phospho-(deoxyribonucleotide)m = (deoxyribonucleotide)n+m + AMP + beta-nicotinamide D-nucleotide.. Functionally, DNA ligase that catalyzes the formation of phosphodiester linkages between 5'-phosphoryl and 3'-hydroxyl groups in double-stranded DNA using NAD as a coenzyme and as the energy source for the reaction. It is essential for DNA replication and repair of damaged DNA. This Cytophaga hutchinsonii (strain ATCC 33406 / DSM 1761 / CIP 103989 / NBRC 15051 / NCIMB 9469 / D465) protein is DNA ligase.